A 373-amino-acid chain; its full sequence is Glutamine synthetase (373 aa).

Position 2 is an N-acetylalanine (Ala-2). A required for glutamine-induced ubiquitination by CRL4(CRBN) and proteasomal degradation region spans residues 2–25 (ATSASSHLNKGIKQMYMNLPQGEK). Residues Lys-11 and Lys-14 each carry the N6-acetyllysine modification. Positions 24 to 106 (EKIQLMYIWV…VFCEVFKYNR (83 aa)) constitute a GS beta-grasp domain. At Tyr-104 the chain carries Phosphotyrosine. The GS catalytic domain maps to 113 to 373 (LRHSCKRIMD…TGDEPFQYKN (261 aa)). ATP is bound at residue Glu-134. Mn(2+) contacts are provided by Glu-134, Glu-136, Glu-196, and Glu-203. Position 203–208 (203–208 (EFQIGP)) interacts with ATP. 246–247 (NW) contributes to the L-glutamate binding site. His-253 contacts Mn(2+). Residues 255–257 (NFS), Arg-319, and Arg-324 contribute to the ATP site. Arg-319 lines the L-glutamate pocket. Residue 336-338 (YFE) coordinates ADP. Residue Glu-338 participates in Mn(2+) binding. L-glutamate is bound at residue Arg-340. A Phosphoserine modification is found at Ser-343.

The protein belongs to the glutamine synthetase family. In terms of assembly, decamer; composed of two pentamers. Interacts with PALMD. Interacts with RHOJ. Interacts with BEST2; this interaction tethers a fraction of GLUL to the membrane, causing a decrease of cytosolic glutamine synthase (GS) activity and inhibits the chloride channel activity of BEST2 by affecting the gating at the aperture in the absence of intracellular glutamate. The cofactor is Mg(2+). Requires Mn(2+) as cofactor. In terms of processing, palmitoylated; undergoes autopalmitoylation. Acetylated by EP300/p300; acetylation is stimulated by increased glutamine levels and promotes ubiquitin-mediated proteasomal degradation. Post-translationally, ubiquitinated by ZNRF1. Ubiquitinated by the DCX (DDB1-CUL4-X-box) E3 ubiquitin-protein ligase complex called CRL4(CRBN), leading to proteasomal degradation. In the adult liver, expression is restricted to a small population of hepatocytes which form only a small rim of one to three hepatocytes around the central veins. Expressed in lung microvascular endothelial cells.

It is found in the cytoplasm. The protein resides in the cytosol. The protein localises to the microsome. Its subcellular location is the mitochondrion. It localises to the cell membrane. It catalyses the reaction L-glutamate + NH4(+) + ATP = L-glutamine + ADP + phosphate + H(+). The enzyme catalyses L-cysteinyl-[protein] + hexadecanoyl-CoA = S-hexadecanoyl-L-cysteinyl-[protein] + CoA. Glutamine synthetase activity is inhibited by methionine sulfoximine (MSO). Its function is as follows. Glutamine synthetase that catalyzes the ATP-dependent conversion of glutamate and ammonia to glutamine. Its role depends on tissue localization: in the brain, it regulates the levels of toxic ammonia and converts neurotoxic glutamate to harmless glutamine, whereas in the liver, it is one of the enzymes responsible for the removal of ammonia. Plays a key role in ammonium detoxification during erythropoiesis: the glutamine synthetase activity is required to remove ammonium generated by porphobilinogen deaminase (HMBS) during heme biosynthesis to prevent ammonium accumulation and oxidative stress. Essential for proliferation of fetal skin fibroblasts. Independently of its glutamine synthetase activity, required for endothelial cell migration during vascular development. Involved in angiogenesis by regulating membrane localization and activation of the GTPase RHOJ, possibly by promoting RHOJ palmitoylation. May act as a palmitoyltransferase for RHOJ: able to autopalmitoylate and then transfer the palmitoyl group to RHOJ. Plays a role in ribosomal 40S subunit biogenesis. Through the interaction with BEST2, inhibits BEST2 channel activity by affecting the gating at the aperture in the absence of intracellular L-glutamate, but sensitizes BEST2 to intracellular L-glutamate, which promotes the opening of BEST2 and thus relieves its inhibitory effect on BEST2. The polypeptide is Glutamine synthetase (Rattus norvegicus (Rat)).